The chain runs to 230 residues: Large ribosomal subunit protein uL1 (230 aa).

The protein belongs to the universal ribosomal protein uL1 family. In terms of assembly, part of the 50S ribosomal subunit.

Binds directly to 23S rRNA. The L1 stalk is quite mobile in the ribosome, and is involved in E site tRNA release. Its function is as follows. Protein L1 is also a translational repressor protein, it controls the translation of the L11 operon by binding to its mRNA. This Desulforapulum autotrophicum (strain ATCC 43914 / DSM 3382 / VKM B-1955 / HRM2) (Desulfobacterium autotrophicum) protein is Large ribosomal subunit protein uL1.